The chain runs to 551 residues: RCC1 and BTB domain-containing protein 2 (551 aa).

6 RCC1 repeats span residues 64–115, 117–169, 171–222, 223–274, 276–326, and 328–382; these read NDEI…VLAT, DGEV…VLTS, GEVF…AVVD, TGEV…VLTD, GQIY…AAKT, and GGHV…TVAE. In terms of domain architecture, BTB spans 394 to 457; the sequence is ADLKFLVDGK…LYTDNISLSP (64 aa).

In terms of tissue distribution, expressed in testis and heart (at protein level).

It localises to the cytoplasmic vesicle. It is found in the secretory vesicle. The protein resides in the acrosome. The chain is RCC1 and BTB domain-containing protein 2 (Rcbtb2) from Mus musculus (Mouse).